The following is a 369-amino-acid chain: MKFIDEAKIEVIAGDGGNGVASFCREKFRPFGGPDGGDGGKGGSIYAVADRNINTLVDFRFAKMHKAKNGENGRGADCYGKGADDIKLRMPVGTLIIDNNDGELIADLTEHGQEVLIAKGGEGGWGNIHFKSSTNRAPRQKSEGKEGERRELRLELKVLADIGLLGMPNAGKSTFISAVSNARPKIADYPFTTLHPNLGVVRVSHEKSFVIADIPGLIEGASDGAGLGIQFLRHLQRTRLLLHIVDLAPFDNVDPVKEAKAIVKELKKYDEALFDKPRWLVLNKLDMVPEEERKKRVKDFIKRFGWKGPVFEISALTREGCSDLVTEIYEYIAVQRQAEQRTEETPQMVEEARGIDSIDPDDPRFKIID.

In terms of domain architecture, Obg spans 1 to 159; sequence MKFIDEAKIE…RELRLELKVL (159 aa). The tract at residues 128 to 148 is disordered; sequence IHFKSSTNRAPRQKSEGKEGE. The 174-residue stretch at 160–333 folds into the OBG-type G domain; the sequence is ADIGLLGMPN…LVTEIYEYIA (174 aa). GTP is bound by residues 166–173, 191–195, 213–216, 283–286, and 314–316; these read GMPNAGKS, FTTLH, DIPG, NKLD, and SAL. Positions 173 and 193 each coordinate Mg(2+).

This sequence belongs to the TRAFAC class OBG-HflX-like GTPase superfamily. OBG GTPase family. In terms of assembly, monomer. The cofactor is Mg(2+).

The protein resides in the cytoplasm. Functionally, an essential GTPase which binds GTP, GDP and possibly (p)ppGpp with moderate affinity, with high nucleotide exchange rates and a fairly low GTP hydrolysis rate. Plays a role in control of the cell cycle, stress response, ribosome biogenesis and in those bacteria that undergo differentiation, in morphogenesis control. The chain is GTPase Obg from Janthinobacterium sp. (strain Marseille) (Minibacterium massiliensis).